A 348-amino-acid polypeptide reads, in one-letter code: MSIEIRNITKSFGSFQALKGIDLTIGSGELVALLGPSGCGKTTLLRIIAGLEAADSGQILLHGEDTTHRHVRERRVGFVFQHYALFRHMSVFENIAFGLRVRPRGQRPPEAEIRRRVQELLELVQLDWLADRHPGQLSGGQRQRIALARALAVEPKVLLLDEPFGALDAKVRKDLRRWLRRLHDGLHITSVFVTHDQEEALEVADRVVVLNAGQIEQVGSADEVYDHPATPFVCQFIGDVNLFHGRVHGGRALIGETVIELPDIAESDTEKALFFARPHEIEIGRGTGIGAVVRAIRRRGNAVRVELERKDGRGAVEAELSREAFGRHAIKHGDEVVIQPSKIRMFQP.

An ABC transporter domain is found at 3-237; that stretch reads IEIRNITKSF…PATPFVCQFI (235 aa). 35–42 lines the ATP pocket; sequence GPSGCGKT.

Belongs to the ABC transporter superfamily. Sulfate/tungstate importer (TC 3.A.1.6) family. The complex is composed of two ATP-binding proteins (CysA), two transmembrane proteins (CysT and CysW) and a solute-binding protein (CysP).

It localises to the cell inner membrane. The enzyme catalyses sulfate(out) + ATP + H2O = sulfate(in) + ADP + phosphate + H(+). It carries out the reaction thiosulfate(out) + ATP + H2O = thiosulfate(in) + ADP + phosphate + H(+). Its function is as follows. Part of the ABC transporter complex CysAWTP involved in sulfate/thiosulfate import. Responsible for energy coupling to the transport system. In Methylococcus capsulatus (strain ATCC 33009 / NCIMB 11132 / Bath), this protein is Sulfate/thiosulfate import ATP-binding protein CysA.